The primary structure comprises 260 residues: Small ribosomal subunit protein uS2 (260 aa).

Belongs to the universal ribosomal protein uS2 family.

This Roseobacter denitrificans (strain ATCC 33942 / OCh 114) (Erythrobacter sp. (strain OCh 114)) protein is Small ribosomal subunit protein uS2.